The primary structure comprises 556 residues: 2-succinyl-5-enolpyruvyl-6-hydroxy-3-cyclohexene-1-carboxylate synthase (556 aa).

This sequence belongs to the TPP enzyme family. MenD subfamily. Homodimer. Mg(2+) is required as a cofactor. The cofactor is Mn(2+). Requires thiamine diphosphate as cofactor.

It carries out the reaction isochorismate + 2-oxoglutarate + H(+) = 5-enolpyruvoyl-6-hydroxy-2-succinyl-cyclohex-3-ene-1-carboxylate + CO2. Its pathway is quinol/quinone metabolism; 1,4-dihydroxy-2-naphthoate biosynthesis; 1,4-dihydroxy-2-naphthoate from chorismate: step 2/7. The protein operates within quinol/quinone metabolism; menaquinone biosynthesis. In terms of biological role, catalyzes the thiamine diphosphate-dependent decarboxylation of 2-oxoglutarate and the subsequent addition of the resulting succinic semialdehyde-thiamine pyrophosphate anion to isochorismate to yield 2-succinyl-5-enolpyruvyl-6-hydroxy-3-cyclohexene-1-carboxylate (SEPHCHC). The sequence is that of 2-succinyl-5-enolpyruvyl-6-hydroxy-3-cyclohexene-1-carboxylate synthase from Salmonella arizonae (strain ATCC BAA-731 / CDC346-86 / RSK2980).